A 332-amino-acid polypeptide reads, in one-letter code: tRNA-dihydrouridine(20/20a) synthase (332 aa).

FMN contacts are provided by residues 19-21 (PML) and Q71. The active-site Proton donor is C101. Residues K140, H173, 213–215 (NGG), and 235–236 (GR) each bind FMN.

It belongs to the Dus family. DusA subfamily. FMN is required as a cofactor.

The catalysed reaction is 5,6-dihydrouridine(20) in tRNA + NADP(+) = uridine(20) in tRNA + NADPH + H(+). It catalyses the reaction 5,6-dihydrouridine(20) in tRNA + NAD(+) = uridine(20) in tRNA + NADH + H(+). It carries out the reaction 5,6-dihydrouridine(20a) in tRNA + NADP(+) = uridine(20a) in tRNA + NADPH + H(+). The enzyme catalyses 5,6-dihydrouridine(20a) in tRNA + NAD(+) = uridine(20a) in tRNA + NADH + H(+). In terms of biological role, catalyzes the synthesis of 5,6-dihydrouridine (D), a modified base found in the D-loop of most tRNAs, via the reduction of the C5-C6 double bond in target uridines. Specifically modifies U20 and U20a in tRNAs. In Salmonella typhi, this protein is tRNA-dihydrouridine(20/20a) synthase.